Here is a 160-residue protein sequence, read N- to C-terminus: Phosphopantetheine adenylyltransferase (160 aa).

Substrate is bound at residue Thr11. ATP is bound by residues 11-12 (TF) and His19. 3 residues coordinate substrate: Lys43, Leu75, and Arg89. ATP-binding positions include 90–92 (GLR), Glu100, and 125–131 (HMFVSAS).

It belongs to the bacterial CoaD family. In terms of assembly, homohexamer. It depends on Mg(2+) as a cofactor.

It localises to the cytoplasm. It carries out the reaction (R)-4'-phosphopantetheine + ATP + H(+) = 3'-dephospho-CoA + diphosphate. The protein operates within cofactor biosynthesis; coenzyme A biosynthesis; CoA from (R)-pantothenate: step 4/5. Its function is as follows. Reversibly transfers an adenylyl group from ATP to 4'-phosphopantetheine, yielding dephospho-CoA (dPCoA) and pyrophosphate. The protein is Phosphopantetheine adenylyltransferase of Methylobacillus flagellatus (strain ATCC 51484 / DSM 6875 / VKM B-1610 / KT).